A 367-amino-acid chain; its full sequence is Histone RNA hairpin-binding protein (367 aa).

Over residues 1–12 the composition is skewed to polar residues; it reads MAQKTPTKGTRS. Disordered regions lie at residues 1–24 and 49–200; these read MAQK…SPIK and EVTE…HWEE. The span at 57–73 shows a compositional bias: basic and acidic residues; the sequence is LASRLEEERRCKSESRR. The span at 147-156 shows a compositional bias: polar residues; sequence SNASTINEGA. Residues 183–192 are compositionally biased toward low complexity; it reads SDSSSVASSP. An RNA-binding region spans residues 206–275; the sequence is CTDEAVLKRR…KWKRSLYEYC (70 aa). Residues 342–367 form a disordered region; it reads MDESTLKASTNTDPSAPTDFSKMSSH. A compositionally biased stretch (polar residues) spans 347-356; the sequence is LKASTNTDPS.

This sequence belongs to the SLBP family. Post-translationally, ubiquitinated by the CBC(fem-1) (Cul2-ElonginB-ElonginC) E3 ubiquitin-protein ligase complex, leading to its degradation.

Involved in histone pre-mRNA 3' processing. Required for chromosome condensation, progression of cell death and morphogenesis. This is Histone RNA hairpin-binding protein (cdl-1) from Caenorhabditis elegans.